The sequence spans 281 residues: MANLSGYNFAYLDEQTKRMIRRAILKAVAIPGYQVPFGGREMPMPYGWGTGGIQLTASVIGESDVLKVIDQGADDTTNAVSIRNFFKRVTGVNTTERTDDATVIQTRHRIPETPLTEDQIIIFQVPIPEPLRFIEPRETETRTMHALEEYGVMQVKLYEDIARFGHIATTYAYPVKVNGRYVMDPSPIPKFDNPKMDMMPALQLFGAGREKRIYAVPPFTRVESLDFDDHPFTVQQWDEPCAICGSTHSYLDEVVLDDAGNRMFVCSDTDYCRQQSEAKNQ.

It belongs to the PhnJ family. As to quaternary structure, forms a complex with PhnG, PhnH, PhnI and PhnK with the suggested composition PhnG(4)H(2)I(2)J(2)K. The cofactor is [4Fe-4S] cluster.

It carries out the reaction alpha-D-ribose 1-methylphosphonate 5-phosphate + AH2 + S-adenosyl-L-methionine = alpha-D-ribose 1,2-cyclic phosphate 5-phosphate + methane + 5'-deoxyadenosine + L-methionine + A + H(+). Catalyzes the breakage of the C-P bond in alpha-D-ribose 1-methylphosphonate 5-phosphate (PRPn) forming alpha-D-ribose 1,2-cyclic phosphate 5-phosphate (PRcP). The sequence is that of Alpha-D-ribose 1-methylphosphonate 5-phosphate C-P lyase (phnJ) from Escherichia coli (strain K12).